The chain runs to 694 residues: Frizzled-2 (694 aa).

An N-terminal signal peptide occupies residues 1–22; it reads MRHNRLKVLILGLVLLLTSCRA. The Extracellular segment spans residues 23 to 315; sequence DGPLHSADHG…GPFFSNDEKD (293 aa). Residues 59 to 180 form the FZ domain; the sequence is DPNLRCEEIT…GDPDNLCMEQ (122 aa). Cystine bridges form between cysteine 64-cysteine 125, cysteine 72-cysteine 118, cysteine 109-cysteine 147, cysteine 136-cysteine 177, and cysteine 140-cysteine 164. N-linked (GlcNAc...) asparagine glycosylation is present at asparagine 78. Residues 175-253 form a disordered region; it reads NLCMEQPSYT…QGEKASGKEC (79 aa). Residues 187-224 show a composition bias toward gly residues; it reads GSGGSSGGSGGSGSGSGSGGKRKQGGSGSGGSGAGGSS. Asparagine 288 is a glycosylation site (N-linked (GlcNAc...) asparagine). The helical transmembrane segment at 316–336 threads the bilayer; sequence FAGLWIALWSGLCFCSTLMTL. Residues 337–352 lie on the Cytoplasmic side of the membrane; it reads TTFIIDTERFKYPERP. Residues 353–373 traverse the membrane as a helical segment; that stretch reads IVFLSACYFMVAVGYLSRNFL. Residues 374-397 lie on the Extracellular side of the membrane; sequence QNEEIACDGLLLRESSTGPHSCTL. A helical membrane pass occupies residues 398 to 418; the sequence is VFLLTYFFGMASSIWWVILSF. Topologically, residues 419–439 are cytoplasmic; sequence TWFLAAGLKWGNEAITKHSQY. Residues 440–460 traverse the membrane as a helical segment; the sequence is FHLAAWLIPTVQSVAVLLLSA. The Extracellular portion of the chain corresponds to 461–482; the sequence is VDGDPILGICYVGNLNPDHLKT. The helical transmembrane segment at 483 to 503 threads the bilayer; sequence FVLAPLFVYLVIGTTFLMAGF. At 504–534 the chain is on the cytoplasmic side; the sequence is VSLFRIRSVIKQQGGVGAGVKADKLEKLMIR. Residues 535–555 traverse the membrane as a helical segment; it reads IGIFSVLYTVPATIVIGCYLY. The Extracellular portion of the chain corresponds to 556 to 584; it reads EAAYFEDWIKALACPCAQVKGPGKKPLYS. The chain crosses the membrane as a helical span at residues 585 to 605; sequence VLMLKYFMALAVGITSGVWIW. The Cytoplasmic segment spans residues 606–694; sequence SGKTLESWRR…VLKQPAASHV (89 aa). The Lys-Thr-X-X-X-Trp motif, mediates interaction with the PDZ domain of Dvl family members signature appears at 608–613; the sequence is KTLESW. Positions 692-694 match the PDZ-binding motif; sequence SHV.

The protein belongs to the G-protein coupled receptor Fz/Smo family. In terms of assembly, interacts with ATP6AP2.

Its subcellular location is the cell membrane. Functionally, receptor for Wnt proteins. Most of frizzled receptors are coupled to the beta-catenin canonical signaling pathway, which leads to the activation of disheveled proteins, inhibition of GSK-3 kinase, nuclear accumulation of beta-catenin and activation of Wnt target genes. A second signaling pathway involving PKC and calcium fluxes has been seen for some family members, but it is not yet clear if it represents a distinct pathway or if it can be integrated in the canonical pathway, as PKC seems to be required for Wnt-mediated inactivation of GSK-3 kinase. Both pathways seem to involve interactions with G-proteins. Required to coordinate the cytoskeletons of epidermal cells to produce a parallel array of cuticular hairs and bristles. The chain is Frizzled-2 (fz2) from Drosophila melanogaster (Fruit fly).